Consider the following 651-residue polypeptide: MVLTGPLQRESVSMAKRVSMLDQHKKSSCARVRVAVRLRPYMDEKDEAKATTVCVRGLDSQSLEIVNWRNQLETMQYQFDAFYGDSASQREIYMGSVCHILPHLLIGQNASVFAYGPTGAGKTHTMLGNPNQPGVIPRAVRDLLQMSRTAASAPENENWTYTINMSYVEIYQEKVMDLLEPKNKDLPIREDKDHNILIPGVTQKMINSFADFDEHFIPASQNRTVASTKLNDRSSRSHAVLLIKVQKSQQVVPFRQLTGKLYLIDLAGSEDNRRTGNQGIRLKESGAINSSLFTLSKVVDALNQGLPRIPYRDSKLTRLLQDSLGGSAHSVMITNIAPEQTYYFDTLTALNFAAKSKQIINKPFSQETTQTVVQPAMKRPREETGHIAGSQKRKKSKNDSTESSPNSSMDTAGKQKLNLATLDPAVVERLLKLDKILTEKGKKKAQLLSTPKRERMALLKKWEESQMEIERLKEKQKELEQKAMEAEARLEKSNNSDLSDSSVSENTFRAPLRGRNTSTAKVKKVLRVLPMQGNSQLQSTVEEGIPVFEKKKKKKQVTCEGLENQPTWEMNMRTDLLESGKERILKLLNTGSVKELKSLQRIGDKKAKLIIGWREVNGPFKNVEELACLEGISAKQVSSFIKANIMSSIAS.

The Kinesin motor domain occupies 31-359 (RVRVAVRLRP…LNFAAKSKQI (329 aa)). 116–123 (GPTGAGKT) is a binding site for ATP. The interval 366–413 (QETTQTVVQPAMKRPREETGHIAGSQKRKKSKNDSTESSPNSSMDTAG) is disordered. The segment covering 401 to 410 (TESSPNSSMD) has biased composition (polar residues). Positions 452–498 (KRERMALLKKWEESQMEIERLKEKQKELEQKAMEAEARLEKSNNSDL) form a coiled coil. The Important for regulated proteolytic degradation signature appears at 561–564 (GLEN).

The protein belongs to the TRAFAC class myosin-kinesin ATPase superfamily. Kinesin family. In terms of processing, ubiquitinated, leading to its subsequent proteasomal degradation.

Its subcellular location is the nucleus. The protein resides in the cytoplasm. The protein localises to the cytoskeleton. Kinesin family member that is involved in spindle formation and the movements of chromosomes during mitosis and meiosis. Binds to microtubules and to DNA. This is Kinesin-like protein KIF22-A (kif22-a) from Xenopus laevis (African clawed frog).